A 432-amino-acid polypeptide reads, in one-letter code: Small ribosomal subunit protein uS5m (432 aa).

The interval A110–R130 is disordered. Over residues R113–D127 the composition is skewed to basic residues. The S5 DRBM domain occupies F220 to I284.

This sequence belongs to the universal ribosomal protein uS5 family. Component of the mitochondrial ribosome small subunit (28S) which comprises a 12S rRNA and about 30 distinct proteins.

The protein resides in the mitochondrion. The polypeptide is Small ribosomal subunit protein uS5m (Mrps5) (Mus musculus (Mouse)).